The following is a 475-amino-acid chain: UDP-N-acetylmuramate--L-alanine ligase (475 aa).

An ATP-binding site is contributed by 125–131; the sequence is GTHGKTT.

It belongs to the MurCDEF family.

The protein localises to the cytoplasm. It carries out the reaction UDP-N-acetyl-alpha-D-muramate + L-alanine + ATP = UDP-N-acetyl-alpha-D-muramoyl-L-alanine + ADP + phosphate + H(+). It functions in the pathway cell wall biogenesis; peptidoglycan biosynthesis. In terms of biological role, cell wall formation. In Haemophilus influenzae (strain PittGG), this protein is UDP-N-acetylmuramate--L-alanine ligase.